Reading from the N-terminus, the 224-residue chain is V-type ATP synthase subunit D (224 aa).

Residues 205–214 are compositionally biased toward basic and acidic residues; that stretch reads AKAKQQRKDI. The disordered stretch occupies residues 205 to 224; it reads AKAKQQRKDIQSGNHGSAAD. Residues 215–224 are compositionally biased toward polar residues; the sequence is QSGNHGSAAD.

It belongs to the V-ATPase D subunit family.

Produces ATP from ADP in the presence of a proton gradient across the membrane. The protein is V-type ATP synthase subunit D of Deinococcus deserti (strain DSM 17065 / CIP 109153 / LMG 22923 / VCD115).